The chain runs to 273 residues: SET domain-containing protein 9 (273 aa).

In terms of domain architecture, SET spans phenylalanine 96 to tyrosine 269. An S-adenosyl-L-methionine-binding site is contributed by tyrosine 268.

Belongs to the class V-like SAM-binding methyltransferase superfamily.

This chain is SET domain-containing protein 9 (SETD9), found in Pongo abelii (Sumatran orangutan).